The primary structure comprises 174 residues: Guided entry of tail-anchored proteins factor 1 (174 aa).

At 1 to 8 (MSASETDR) the chain is on the lumenal side. The chain crosses the membrane as a helical span at residues 9–29 (WAWLLVLSFVFGCNLLRILLP). Over 30 to 99 (SLSSFISRVL…VKARTAQLAK (70 aa)) the chain is Cytoplasmic. Positions 39 to 94 (LQKDAEQESQMRAEIQGMKQELSTVNMMDEFARYARLERKINKMTDKLKTHVKART) form a coiled coil. The interaction with GET3/TRC40 stretch occupies residues 39–97 (LQKDAEQESQMRAEIQGMKQELSTVNMMDEFARYARLERKINKMTDKLKTHVKARTAQL). A helical transmembrane segment spans residues 100 to 120 (IKWFISVAFYILQAALMISLI). The Lumenal segment spans residues 121–148 (WKYYSVPVAVVPSKWITPLDRLVAFPTR). A helical transmembrane segment spans residues 149–169 (VAGGIGITCWILVCNKVVAIV). Residues 170–174 (LHPFS) are Cytoplasmic-facing.

It belongs to the WRB/GET1 family. In terms of assembly, component of the Golgi to ER traffic (GET) complex, which is composed of GET1, CAMLG/GET2 and GET3. Within the complex, GET1 and CAMLG form a heterotetramer which is stabilized by phosphatidylinositol binding and which binds to the GET3 homodimer. Interacts with CAMLG/GET2 (via C-terminus). GET3 shows a higher affinity for CAMLG than for GET1.

The protein resides in the endoplasmic reticulum membrane. Functionally, required for the post-translational delivery of tail-anchored (TA) proteins to the endoplasmic reticulum. Together with CAMLG/GET2, acts as a membrane receptor for soluble GET3/TRC40, which recognizes and selectively binds the transmembrane domain of TA proteins in the cytosol. Required to ensure correct topology and ER insertion of CAMLG. The sequence is that of Guided entry of tail-anchored proteins factor 1 from Mus musculus (Mouse).